The following is a 146-amino-acid chain: ATP synthase epsilon chain (146 aa).

It belongs to the ATPase epsilon chain family. F-type ATPases have 2 components, CF(1) - the catalytic core - and CF(0) - the membrane proton channel. CF(1) has five subunits: alpha(3), beta(3), gamma(1), delta(1), epsilon(1). CF(0) has three main subunits: a, b and c.

Its subcellular location is the cell membrane. Produces ATP from ADP in the presence of a proton gradient across the membrane. This Lactobacillus delbrueckii subsp. bulgaricus (strain ATCC 11842 / DSM 20081 / BCRC 10696 / JCM 1002 / NBRC 13953 / NCIMB 11778 / NCTC 12712 / WDCM 00102 / Lb 14) protein is ATP synthase epsilon chain.